The primary structure comprises 546 residues: Probable protein kinase UbiB (546 aa).

One can recognise a Protein kinase domain in the interval 124-502 (DFDITPLASA…RVKQGQSRYL (379 aa)). ATP is bound by residues 130 to 138 (LASASIAQV) and lysine 153. The active-site Proton acceptor is the aspartate 288. The next 2 helical transmembrane spans lie at 501–518 (YLFG…LLFI) and 523–542 (WGMS…LIGW).

This sequence belongs to the ABC1 family. UbiB subfamily.

Its subcellular location is the cell inner membrane. Its pathway is cofactor biosynthesis; ubiquinone biosynthesis [regulation]. Functionally, is probably a protein kinase regulator of UbiI activity which is involved in aerobic coenzyme Q (ubiquinone) biosynthesis. The polypeptide is Probable protein kinase UbiB (Cronobacter sakazakii (strain ATCC BAA-894) (Enterobacter sakazakii)).